The following is a 667-amino-acid chain: 1-deoxy-D-xylulose-5-phosphate synthase (667 aa).

Residues H73 and 113-115 (SHA) each bind thiamine diphosphate. Mg(2+) is bound at residue D145. Residues 146 to 147 (GA), N175, Y297, and E379 contribute to the thiamine diphosphate site. N175 provides a ligand contact to Mg(2+).

Belongs to the transketolase family. DXPS subfamily. In terms of assembly, homodimer. Mg(2+) serves as cofactor. The cofactor is thiamine diphosphate.

It carries out the reaction D-glyceraldehyde 3-phosphate + pyruvate + H(+) = 1-deoxy-D-xylulose 5-phosphate + CO2. It functions in the pathway metabolic intermediate biosynthesis; 1-deoxy-D-xylulose 5-phosphate biosynthesis; 1-deoxy-D-xylulose 5-phosphate from D-glyceraldehyde 3-phosphate and pyruvate: step 1/1. Catalyzes the acyloin condensation reaction between C atoms 2 and 3 of pyruvate and glyceraldehyde 3-phosphate to yield 1-deoxy-D-xylulose-5-phosphate (DXP). The sequence is that of 1-deoxy-D-xylulose-5-phosphate synthase from Kocuria rhizophila (strain ATCC 9341 / DSM 348 / NBRC 103217 / DC2201).